The primary structure comprises 280 residues: Probable 6-phosphogluconolactonase 2 (280 aa).

The protein belongs to the glucosamine/galactosamine-6-phosphate isomerase family. 6-phosphogluconolactonase subfamily.

The catalysed reaction is 6-phospho-D-glucono-1,5-lactone + H2O = 6-phospho-D-gluconate + H(+). Its pathway is carbohydrate degradation; pentose phosphate pathway; D-ribulose 5-phosphate from D-glucose 6-phosphate (oxidative stage): step 2/3. Functionally, hydrolysis of 6-phosphogluconolactone to 6-phosphogluconate. The polypeptide is Probable 6-phosphogluconolactonase 2 (Oryza sativa subsp. indica (Rice)).